The chain runs to 454 residues: Bifunctional protein GlmU (454 aa).

The tract at residues 1–232 is pyrophosphorylase; the sequence is MTDRTCLSIV…VDNVIGINNR (232 aa). UDP-N-acetyl-alpha-D-glucosamine contacts are provided by residues 11 to 14, lysine 25, glutamine 78, and 83 to 84; these read LAAG and GT. Residue aspartate 108 participates in Mg(2+) binding. Residues glycine 144, glutamate 158, asparagine 173, and asparagine 230 each coordinate UDP-N-acetyl-alpha-D-glucosamine. A Mg(2+)-binding site is contributed by asparagine 230. The tract at residues 233 to 253 is linker; that stretch reads AELAEAETIWQNRKRRELMLS. Residues 254-454 form an N-acetyltransferase region; that stretch reads GVTLIAPETV…AIKAAKSVSK (201 aa). UDP-N-acetyl-alpha-D-glucosamine contacts are provided by arginine 319 and lysine 337. Residue histidine 349 is the Proton acceptor of the active site. Positions 352 and 363 each coordinate UDP-N-acetyl-alpha-D-glucosamine. Residues alanine 366, 372 to 373, serine 391, serine 409, and arginine 426 each bind acetyl-CoA; that span reads NY.

The protein in the N-terminal section; belongs to the N-acetylglucosamine-1-phosphate uridyltransferase family. It in the C-terminal section; belongs to the transferase hexapeptide repeat family. In terms of assembly, homotrimer. The cofactor is Mg(2+).

The protein resides in the cytoplasm. The enzyme catalyses alpha-D-glucosamine 1-phosphate + acetyl-CoA = N-acetyl-alpha-D-glucosamine 1-phosphate + CoA + H(+). It carries out the reaction N-acetyl-alpha-D-glucosamine 1-phosphate + UTP + H(+) = UDP-N-acetyl-alpha-D-glucosamine + diphosphate. Its pathway is nucleotide-sugar biosynthesis; UDP-N-acetyl-alpha-D-glucosamine biosynthesis; N-acetyl-alpha-D-glucosamine 1-phosphate from alpha-D-glucosamine 6-phosphate (route II): step 2/2. It functions in the pathway nucleotide-sugar biosynthesis; UDP-N-acetyl-alpha-D-glucosamine biosynthesis; UDP-N-acetyl-alpha-D-glucosamine from N-acetyl-alpha-D-glucosamine 1-phosphate: step 1/1. It participates in bacterial outer membrane biogenesis; LPS lipid A biosynthesis. Its function is as follows. Catalyzes the last two sequential reactions in the de novo biosynthetic pathway for UDP-N-acetylglucosamine (UDP-GlcNAc). The C-terminal domain catalyzes the transfer of acetyl group from acetyl coenzyme A to glucosamine-1-phosphate (GlcN-1-P) to produce N-acetylglucosamine-1-phosphate (GlcNAc-1-P), which is converted into UDP-GlcNAc by the transfer of uridine 5-monophosphate (from uridine 5-triphosphate), a reaction catalyzed by the N-terminal domain. The polypeptide is Bifunctional protein GlmU (Brucella canis (strain ATCC 23365 / NCTC 10854 / RM-666)).